A 194-amino-acid polypeptide reads, in one-letter code: MSYIPYVVEKTGRGERSYDIYSRLLKDRIIMLSGEINDAVASTVVAQLLFLEAEDPDKDIYLYINSPGGVVTSGMSIFDTMNYIKPDVCTICIGQAASMGAFLLSSGAKGKRYSLPNSRIMIHQPLGGARGQATDIQIQAKEIQRLKDTLNGILASQTGQDFATIEKDTDRDNFMSAEEACSYGLIDEVITKHK.

Serine 98 acts as the Nucleophile in catalysis. Residue histidine 123 is part of the active site.

It belongs to the peptidase S14 family. In terms of assembly, fourteen ClpP subunits assemble into 2 heptameric rings which stack back to back to give a disk-like structure with a central cavity, resembling the structure of eukaryotic proteasomes.

It localises to the cytoplasm. It carries out the reaction Hydrolysis of proteins to small peptides in the presence of ATP and magnesium. alpha-casein is the usual test substrate. In the absence of ATP, only oligopeptides shorter than five residues are hydrolyzed (such as succinyl-Leu-Tyr-|-NHMec, and Leu-Tyr-Leu-|-Tyr-Trp, in which cleavage of the -Tyr-|-Leu- and -Tyr-|-Trp bonds also occurs).. Functionally, cleaves peptides in various proteins in a process that requires ATP hydrolysis. Has a chymotrypsin-like activity. Plays a major role in the degradation of misfolded proteins. This Aliarcobacter butzleri (strain RM4018) (Arcobacter butzleri) protein is ATP-dependent Clp protease proteolytic subunit.